The primary structure comprises 380 residues: Lipid-A-disaccharide synthase (380 aa).

The protein belongs to the LpxB family.

It carries out the reaction a lipid X + a UDP-2-N,3-O-bis[(3R)-3-hydroxyacyl]-alpha-D-glucosamine = a lipid A disaccharide + UDP + H(+). It functions in the pathway bacterial outer membrane biogenesis; LPS lipid A biosynthesis. Condensation of UDP-2,3-diacylglucosamine and 2,3-diacylglucosamine-1-phosphate to form lipid A disaccharide, a precursor of lipid A, a phosphorylated glycolipid that anchors the lipopolysaccharide to the outer membrane of the cell. This is Lipid-A-disaccharide synthase from Francisella philomiragia subsp. philomiragia (strain ATCC 25017 / CCUG 19701 / FSC 153 / O#319-036).